The following is a 36-amino-acid chain: Pancreatic polypeptide (36 aa).

The residue at position 36 (Phe-36) is a Phenylalanine amide.

Belongs to the NPY family.

Its subcellular location is the secreted. Its function is as follows. Hormone secreted by pancreatic cells that acts as a regulator of pancreatic and gastrointestinal functions. This is Pancreatic polypeptide (ppy) from Rana temporaria (European common frog).